The following is a 70-amino-acid chain: Large ribosomal subunit protein bL31 (70 aa).

Residues C16, C18, C37, and C40 each contribute to the Zn(2+) site.

The protein belongs to the bacterial ribosomal protein bL31 family. Type A subfamily. Part of the 50S ribosomal subunit. Zn(2+) is required as a cofactor.

In terms of biological role, binds the 23S rRNA. This Erwinia tasmaniensis (strain DSM 17950 / CFBP 7177 / CIP 109463 / NCPPB 4357 / Et1/99) protein is Large ribosomal subunit protein bL31.